We begin with the raw amino-acid sequence, 532 residues long: All-trans-retinyl ester 13-cis isomerohydrolase (532 aa).

The S-palmitoyl cysteine; in membrane form moiety is linked to residue cysteine 112. The Fe cation site is built by histidine 180, histidine 241, and histidine 313. Cysteine 329 is lipidated: S-palmitoyl cysteine; in membrane form. A Fe cation-binding site is contributed by histidine 527.

This sequence belongs to the carotenoid oxygenase family. Fe(2+) serves as cofactor. Palmitoylated. In terms of tissue distribution, predominantly expressed in brain. Expressed at a low level in the eye.

The protein resides in the cytoplasm. It is found in the cell membrane. It carries out the reaction an all-trans-retinyl ester + H2O = 13-cis-retinol + a fatty acid + H(+). The catalysed reaction is lutein = (3R,3'S)-zeaxanthin. In terms of biological role, specifically generates 13-cis retinol, a stereoisomeric form of retinoic acid. Capable of catalyzing the isomerization of lutein to meso-zeaxanthin an eye-specific carotenoid. The polypeptide is All-trans-retinyl ester 13-cis isomerohydrolase (rpe65b) (Danio rerio (Zebrafish)).